The chain runs to 338 residues: Anthranilate phosphoribosyltransferase (338 aa).

5-phospho-alpha-D-ribose 1-diphosphate-binding positions include glycine 81, glycine 84–aspartate 85, serine 89, asparagine 91–threonine 94, lysine 109–serine 117, and alanine 121. Glycine 81 contacts anthranilate. Residue serine 93 coordinates Mg(2+). Position 112 (asparagine 112) interacts with anthranilate. Arginine 167 contributes to the anthranilate binding site. Residues aspartate 226 and glutamate 227 each coordinate Mg(2+).

The protein belongs to the anthranilate phosphoribosyltransferase family. In terms of assembly, homodimer. Mg(2+) is required as a cofactor.

The enzyme catalyses N-(5-phospho-beta-D-ribosyl)anthranilate + diphosphate = 5-phospho-alpha-D-ribose 1-diphosphate + anthranilate. It functions in the pathway amino-acid biosynthesis; L-tryptophan biosynthesis; L-tryptophan from chorismate: step 2/5. Catalyzes the transfer of the phosphoribosyl group of 5-phosphorylribose-1-pyrophosphate (PRPP) to anthranilate to yield N-(5'-phosphoribosyl)-anthranilate (PRA). This chain is Anthranilate phosphoribosyltransferase, found in Rhodopseudomonas palustris (strain HaA2).